The sequence spans 652 residues: DNA ligase (652 aa).

Residues 29-33 (DSDYD), 78-79 (SL), and glutamate 107 each bind NAD(+). Lysine 109 serves as the catalytic N6-AMP-lysine intermediate. NAD(+) is bound by residues arginine 130, glutamate 164, lysine 278, and lysine 302. Zn(2+)-binding residues include cysteine 395, cysteine 398, cysteine 413, and cysteine 418. The BRCT domain maps to 577-652 (NSDAALFGLT…IEDEDWLRQL (76 aa)).

Belongs to the NAD-dependent DNA ligase family. LigA subfamily. Mg(2+) is required as a cofactor. Mn(2+) serves as cofactor.

The enzyme catalyses NAD(+) + (deoxyribonucleotide)n-3'-hydroxyl + 5'-phospho-(deoxyribonucleotide)m = (deoxyribonucleotide)n+m + AMP + beta-nicotinamide D-nucleotide.. In terms of biological role, DNA ligase that catalyzes the formation of phosphodiester linkages between 5'-phosphoryl and 3'-hydroxyl groups in double-stranded DNA using NAD as a coenzyme and as the energy source for the reaction. It is essential for DNA replication and repair of damaged DNA. This is DNA ligase from Streptococcus pyogenes serotype M49 (strain NZ131).